Consider the following 1429-residue polypeptide: Nitric oxide synthase 1 (1429 aa).

The segment at 1–200 (MEENTFGVQQ…LQDIGEHDEL (200 aa)) is interaction with NOSIP. One can recognise a PDZ domain in the interval 17–99 (SVRLFKRKVG…ETHVVLILRG (83 aa)). Disordered regions lie at residues 152–174 (VTGL…SVSQ), 214–255 (GSKA…DNDR), and 271–298 (NNPY…SRCP). Positions 160–174 (QHAQGHGQGAGSVSQ) are enriched in low complexity. Positions 163-240 (QGHGQGAGSV…TGIQVDRDLD (78 aa)) are interaction with DYNLL1/PIN. Residues 226-243 (AEMKDTGIQVDRDLDGKS) show a composition bias toward basic and acidic residues. Serine 280 carries the phosphoserine modification. The segment covering 280–294 (SPTSGKQSPTKNGSP) has biased composition (polar residues). Serine 334 is a (6R)-L-erythro-5,6,7,8-tetrahydrobiopterin binding site. Cysteine 415 provides a ligand contact to heme b. Residues glutamine 478, tryptophan 587, tyrosine 588, and glutamate 592 each contribute to the L-arginine site. 3 residues coordinate (6R)-L-erythro-5,6,7,8-tetrahydrobiopterin: valine 677, tryptophan 678, and phenylalanine 691. Tyrosine 706 contributes to the heme b binding site. The tract at residues 725–745 (KRRAIGFKKLAEAVKFSAKLM) is calmodulin-binding. Residues 755 to 935 (ATILYATETG…AFRTWAKKVF (181 aa)) form the Flavodoxin-like domain. Residues threonine 761, glutamate 762, threonine 763, lysine 765, serine 766, serine 807, threonine 808, and glycine 812 each coordinate FMN. Phosphoserine is present on residues serine 847, serine 857, and serine 858. Residues serine 886, histidine 891, cysteine 893, glutamate 919, and glutamine 923 each coordinate FMN. Residues 990 to 1237 (KRVSAARLLS…VRGAPSFHLP (248 aa)) form the FAD-binding FR-type domain. Arginine 1010 is a binding site for NADP(+). Residues histidine 1032, arginine 1173, tyrosine 1174, tyrosine 1175, serine 1176, threonine 1191, and alanine 1193 each coordinate FAD. Position 1196 (serine 1196) interacts with NADP(+). Tyrosine 1197, valine 1210, cysteine 1211, and serine 1212 together coordinate FAD. NADP(+)-binding residues include threonine 1251, arginine 1284, serine 1313, arginine 1314, lysine 1320, tyrosine 1322, glutamine 1324, aspartate 1357, threonine 1398, and arginine 1400.

The protein belongs to the NOS family. In terms of assembly, homodimer. Interacts with DLG4 (via N-terminal tandem pair of PDZ domains); the interaction possibly being prevented by the association between NOS1 and CAPON. Forms a ternary complex with CAPON and RASD1. Forms a ternary complex with CAPON and SYN1. Interacts with ZDHHC23. Interacts with NOSIP; which may impair its synaptic location. Interacts with HTR4. Interacts with SLC6A4. Interacts with VAC14. Forms a complex with ASL, ASS1 and SLC7A1; the complex regulates cell-autonomous L-arginine synthesis and citrulline recycling while channeling extracellular L-arginine to nitric oxide synthesis pathway. Interacts with DMD; localizes NOS1 to sarcolemma in muscle cells. Interacts with DYNLL1; inhibits the nitric oxide synthase activity. The cofactor is heme b. FAD serves as cofactor. It depends on FMN as a cofactor. Requires (6R)-L-erythro-5,6,7,8-tetrahydrobiopterin as cofactor. Ubiquitinated; mediated by STUB1/CHIP in the presence of Hsp70 and Hsp40 (in vitro). In terms of tissue distribution, isoform N-NOS-1 is expressed in brain and colorectum. Found in the Auerbach's plexus of the enteric nervous system. Isoform PNNOS is expressed in the penis, urethra, prostate, and skeletal muscle, and coexists with the cerebellar nnos in the pelvic plexus, bladder and liver, and is detectable in the cerebellum.

The protein resides in the cell membrane. It is found in the sarcolemma. It localises to the cell projection. Its subcellular location is the dendritic spine. It carries out the reaction 2 L-arginine + 3 NADPH + 4 O2 + H(+) = 2 L-citrulline + 2 nitric oxide + 3 NADP(+) + 4 H2O. With respect to regulation, stimulated by calcium/calmodulin. Inhibited by DYNLL1 that prevents the dimerization of the protein. Inhibited by NOSIP. In terms of biological role, produces nitric oxide (NO) which is a messenger molecule with diverse functions throughout the body. In the brain and peripheral nervous system, NO displays many properties of a neurotransmitter. Inhibitory transmitter for non-adrenergic and non-cholinergic nerves in the colorectum. Probably has nitrosylase activity and mediates cysteine S-nitrosylation of cytoplasmic target proteins such SRR. Inhibitory transmitter for non-adrenergic and non-cholinergic nerves in the colorectum. This Rattus norvegicus (Rat) protein is Nitric oxide synthase 1.